We begin with the raw amino-acid sequence, 1109 residues long: DNA mismatch repair protein MSH7 (1109 aa).

2 disordered regions span residues 19–45 (TKGLVSGDAASGGGGSGGPRFNVKEGD) and 61–86 (DEVRGTDTPPEKVPRRVLPSGFKPAE). Residues 61–74 (DEVRGTDTPPEKVP) are compositionally biased toward basic and acidic residues. 853–860 (GPNMGGKS) lines the ATP pocket.

Belongs to the DNA mismatch repair MutS family. Heterodimer consisting of MSH2-MSH7 (MutS gamma).

Its subcellular location is the nucleus. Component of the post-replicative DNA mismatch repair system (MMR). Forms the heterodimer MutS gamma (MSH2-MSH7 heterodimer) which binds to DNA mismatches thereby initiating DNA repair. MutS gamma recognizes specifically the T/G single base mismatch, but not trinucleotide insertion-deletion loops (IDL). The protein is DNA mismatch repair protein MSH7 (MSH7) of Arabidopsis thaliana (Mouse-ear cress).